A 272-amino-acid chain; its full sequence is 4-hydroxy-tetrahydrodipicolinate reductase (272 aa).

NAD(+)-binding positions include 10 to 15 (GAGGRM), glutamate 36, 100 to 102 (GTT), and 124 to 127 (SGNM). The Proton donor/acceptor role is filled by histidine 157. Histidine 158 contacts (S)-2,3,4,5-tetrahydrodipicolinate. The active-site Proton donor is the lysine 161. Position 167 to 168 (167 to 168 (GT)) interacts with (S)-2,3,4,5-tetrahydrodipicolinate.

It belongs to the DapB family.

Its subcellular location is the cytoplasm. The enzyme catalyses (S)-2,3,4,5-tetrahydrodipicolinate + NAD(+) + H2O = (2S,4S)-4-hydroxy-2,3,4,5-tetrahydrodipicolinate + NADH + H(+). It carries out the reaction (S)-2,3,4,5-tetrahydrodipicolinate + NADP(+) + H2O = (2S,4S)-4-hydroxy-2,3,4,5-tetrahydrodipicolinate + NADPH + H(+). The protein operates within amino-acid biosynthesis; L-lysine biosynthesis via DAP pathway; (S)-tetrahydrodipicolinate from L-aspartate: step 4/4. In terms of biological role, catalyzes the conversion of 4-hydroxy-tetrahydrodipicolinate (HTPA) to tetrahydrodipicolinate. The polypeptide is 4-hydroxy-tetrahydrodipicolinate reductase (Bradyrhizobium sp. (strain ORS 278)).